The chain runs to 139 residues: Cytochrome c-type biogenesis protein CcmE 2 (139 aa).

At 1 to 9 the chain is on the cytoplasmic side; it reads MASLKKSRR. A helical; Signal-anchor for type II membrane protein membrane pass occupies residues 10–30; that stretch reads VRLILFSGVALVSATALIGYA. Over 31–139 the chain is Periplasmic; sequence MRDGIQFFRT…ELAEMEALRD (109 aa). Positions 122 and 126 each coordinate heme.

This sequence belongs to the CcmE/CycJ family.

The protein resides in the cell inner membrane. Heme chaperone required for the biogenesis of c-type cytochromes. Transiently binds heme delivered by CcmC and transfers the heme to apo-cytochromes in a process facilitated by CcmF and CcmH. The sequence is that of Cytochrome c-type biogenesis protein CcmE 2 from Ruegeria pomeroyi (strain ATCC 700808 / DSM 15171 / DSS-3) (Silicibacter pomeroyi).